A 100-amino-acid chain; its full sequence is Competence protein ComGE (100 aa).

Residues 15–35 form a helical membrane-spanning segment; it reads VILLEAVVALAIFASIATLLL.

In terms of assembly, the transformation pili are flexible filaments, consisting mainly of the major pilin ComGC and smaller amounts of the minor pilins, including at least ComGD, ComGF and ComGG, and perhaps ComGE. Interacts with ComGD. Interacts with ComGF. Interacts with ComGG.

The protein resides in the cell membrane. The protein localises to the cell surface. Its function is as follows. Required for formation of the type IV-like pilus (T4P) that plays a role in transformation. Transformation pili are dynamically extended and retracted, perhaps thereby promoting DNA uptake and transformation. Involved in transformation. Required for DNA binding. The chain is Competence protein ComGE from Streptococcus pneumoniae (strain ATCC BAA-255 / R6).